We begin with the raw amino-acid sequence, 279 residues long: Serine protease 29 (279 aa).

Positions 1 to 17 (MLIQLCLTLFFLGCSIA) are cleaved as a signal peptide. In terms of domain architecture, Peptidase S1 spans 31–276 (IVGGHSAPQG…FLPWITQQMQ (246 aa)). An intrachain disulfide couples Cys62 to Cys78. Active-site charge relay system residues include His77 and Asp124. 3 disulfide bridges follow: Cys158/Cys234, Cys191/Cys215, and Cys224/Cys252. Asn197 carries an N-linked (GlcNAc...) asparagine glycan. Ser228 acts as the Charge relay system in catalysis. N-linked (GlcNAc...) asparagine glycosylation occurs at Asn235.

It belongs to the peptidase S1 family. Homooligomer, heterodimer and heterotetramer. Able to form homo- and hetero- tetrameric structures. Heterotetramer is far more stable than the homotetramer. Expressed in embryos and placenta. Found in uterus especially in glandular epithelium during zona lysis and implantation.

It is found in the secreted. In terms of biological role, involved in embryo hatching and implantation. The polypeptide is Serine protease 29 (Prss29) (Mus musculus (Mouse)).